The primary structure comprises 224 residues: Ribonuclease T (224 aa).

One can recognise an Exonuclease domain in the interval V20–F194. The Mg(2+) site is built by D23, E25, H181, and D186. Residue H181 is the Proton donor/acceptor of the active site.

Belongs to the RNase T family. In terms of assembly, homodimer. Mg(2+) is required as a cofactor.

Trims short 3' overhangs of a variety of RNA species, leaving a one or two nucleotide 3' overhang. Responsible for the end-turnover of tRNA: specifically removes the terminal AMP residue from uncharged tRNA (tRNA-C-C-A). Also appears to be involved in tRNA biosynthesis. In Enterobacter sp. (strain 638), this protein is Ribonuclease T.